Reading from the N-terminus, the 177-residue chain is Peptidyl-prolyl cis-trans isomerase H (177 aa).

Residue A2 is modified to N-acetylalanine. The PPIase cyclophilin-type domain maps to 14–176; that stretch reads FFDVSIGGQE…LPVVISQCGE (163 aa).

Belongs to the cyclophilin-type PPIase family. PPIase H subfamily. As to quaternary structure, interacts directly with PRPF4. Part of a heteromeric complex containing PPIH, PRPF3 and PRPF4 that is stable in the absence of RNA. Component of the U4/U6-U5 tri-snRNP complex composed of the U4, U6 and U5 snRNAs and at least PRPF3, PRPF4, PRPF6, PRPF8, PRPF31, SNRNP200, TXNL4A, SNRNP40, DDX23, CD2BP2, PPIH, SNU13, EFTUD2, SART1 and USP39. Heterodimer with PRPF18.

Its subcellular location is the nucleus speckle. The protein localises to the cytoplasm. The enzyme catalyses [protein]-peptidylproline (omega=180) = [protein]-peptidylproline (omega=0). Its activity is regulated as follows. Inhibited by cyclosporin A. Functionally, PPIase that catalyzes the cis-trans isomerization of proline imidic peptide bonds in oligopeptides and may therefore assist protein folding. Participates in pre-mRNA splicing. May play a role in the assembly of the U4/U5/U6 tri-snRNP complex, one of the building blocks of the spliceosome. May act as a chaperone. The sequence is that of Peptidyl-prolyl cis-trans isomerase H (PPIH) from Homo sapiens (Human).